We begin with the raw amino-acid sequence, 48 residues long: Large ribosomal subunit protein eL40 (48 aa).

It belongs to the eukaryotic ribosomal protein eL40 family.

The protein is Large ribosomal subunit protein eL40 of Methanoculleus marisnigri (strain ATCC 35101 / DSM 1498 / JR1).